We begin with the raw amino-acid sequence, 338 residues long: Ornithine carbamoyltransferase, catabolic (338 aa).

Residues 58 to 61 (STRT), Q85, R109, and 136 to 139 (HPTQ) contribute to the carbamoyl phosphate site. L-ornithine contacts are provided by residues N168, D232, and 236 to 237 (SM). Residues 273–274 (CL) and R318 each bind carbamoyl phosphate.

It belongs to the aspartate/ornithine carbamoyltransferase superfamily. OTCase family.

Its subcellular location is the cytoplasm. It carries out the reaction carbamoyl phosphate + L-ornithine = L-citrulline + phosphate + H(+). It participates in amino-acid degradation; L-arginine degradation via ADI pathway; carbamoyl phosphate from L-arginine: step 2/2. Functionally, reversibly catalyzes the transfer of the carbamoyl group from carbamoyl phosphate (CP) to the N(epsilon) atom of ornithine (ORN) to produce L-citrulline. In Streptococcus pneumoniae serotype 4 (strain ATCC BAA-334 / TIGR4), this protein is Ornithine carbamoyltransferase, catabolic.